Consider the following 571-residue polypeptide: 15-cis-phytoene desaturase, chloroplastic/chromoplastic (571 aa).

Residues 1–96 constitute a chloroplast and chromoplast transit peptide; the sequence is MDTGCLSSMN…FRNSERPSKP (96 aa). Residues A107, 126–127, K134, 151–152, and Y157 each bind FAD; these read EA and HI. R292 is a binding site for substrate. Residues I334 and D523 each contribute to the FAD site. A531 contacts substrate. FAD is bound at residue M533.

Belongs to the carotenoid/retinoid oxidoreductase family. Homotetramer. FAD is required as a cofactor.

The protein localises to the plastid. It localises to the chloroplast. Its subcellular location is the chromoplast. It is found in the membrane. The enzyme catalyses 2 a plastoquinone + 15-cis-phytoene = 9,9',15-tri-cis-zeta-carotene + 2 a plastoquinol. It functions in the pathway carotenoid biosynthesis; lycopene biosynthesis. Functionally, converts phytoene into zeta-carotene via the intermediary of phytofluene by the symmetrical introduction of two double bonds at the C-11 and C-11' positions of phytoene with a concomitant isomerization of two neighboring double bonds at the C9 and C9' positions from trans to cis. This Zea mays (Maize) protein is 15-cis-phytoene desaturase, chloroplastic/chromoplastic (PDS1).